A 338-amino-acid polypeptide reads, in one-letter code: Cytochrome c biogenesis protein CcsA (338 aa).

8 helical membrane-spanning segments follow: residues 11–31, 39–59, 76–96, 100–120, 145–165, 244–264, 278–295, and 305–325; these read VLLDNAAFAALMVATALYWLA, LLHELGTGASAVALLSVTGLL, ESLFFLCWCVLAVHIAAEAFA, LVGVFTLPVALGMVAFSSLTL, VMILSYGALMVGSLVSIAFLI, LIGLGFPLITVGIIAGAVWAN, TWSLITWFIFAAYLHARI, and ATLAAVGFVSVWITYLGVNFL.

The protein belongs to the CcmF/CycK/Ccl1/NrfE/CcsA family. As to quaternary structure, may interact with ccs1.

The protein localises to the cell inner membrane. Its function is as follows. Required during biogenesis of c-type cytochromes (cytochrome c6 and cytochrome f) at the step of heme attachment. This is Cytochrome c biogenesis protein CcsA from Gloeobacter violaceus (strain ATCC 29082 / PCC 7421).